Reading from the N-terminus, the 705-residue chain is Phosphoribosylformylglycinamidine synthase subunit PurL (705 aa).

Residue His-32 is part of the active site. Tyr-35 contributes to the ATP binding site. Glu-76 is a binding site for Mg(2+). Residues 77-80 (SHNH) and Arg-99 contribute to the substrate site. Residue His-78 is the Proton acceptor of the active site. Residue Asp-100 participates in Mg(2+) binding. Gln-224 contributes to the substrate binding site. Asp-252 is a Mg(2+) binding site. 296-298 (ESQ) is a substrate binding site. ATP contacts are provided by Asp-471 and Gly-508. Residue Asn-509 coordinates Mg(2+). A substrate-binding site is contributed by Ser-511.

This sequence belongs to the FGAMS family. As to quaternary structure, monomer. Part of the FGAM synthase complex composed of 1 PurL, 1 PurQ and 2 PurS subunits.

The protein localises to the cytoplasm. It catalyses the reaction N(2)-formyl-N(1)-(5-phospho-beta-D-ribosyl)glycinamide + L-glutamine + ATP + H2O = 2-formamido-N(1)-(5-O-phospho-beta-D-ribosyl)acetamidine + L-glutamate + ADP + phosphate + H(+). It functions in the pathway purine metabolism; IMP biosynthesis via de novo pathway; 5-amino-1-(5-phospho-D-ribosyl)imidazole from N(2)-formyl-N(1)-(5-phospho-D-ribosyl)glycinamide: step 1/2. In terms of biological role, part of the phosphoribosylformylglycinamidine synthase complex involved in the purines biosynthetic pathway. Catalyzes the ATP-dependent conversion of formylglycinamide ribonucleotide (FGAR) and glutamine to yield formylglycinamidine ribonucleotide (FGAM) and glutamate. The FGAM synthase complex is composed of three subunits. PurQ produces an ammonia molecule by converting glutamine to glutamate. PurL transfers the ammonia molecule to FGAR to form FGAM in an ATP-dependent manner. PurS interacts with PurQ and PurL and is thought to assist in the transfer of the ammonia molecule from PurQ to PurL. The protein is Phosphoribosylformylglycinamidine synthase subunit PurL of Pyrococcus horikoshii (strain ATCC 700860 / DSM 12428 / JCM 9974 / NBRC 100139 / OT-3).